A 339-amino-acid polypeptide reads, in one-letter code: Heat-inducible transcription repressor HrcA (339 aa).

It belongs to the HrcA family.

Functionally, negative regulator of class I heat shock genes (grpE-dnaK-dnaJ and groELS operons). Prevents heat-shock induction of these operons. This chain is Heat-inducible transcription repressor HrcA, found in Parafrankia sp. (strain EAN1pec).